Consider the following 103-residue polypeptide: MHVKKGDKVMVISGKDKGKQGTILAAFPKKDRVLVEGVNMVKKHSKPTQANPQGGISNQEAPIHVSNVMPLDPKTGEVTRVGYKVEDGKKVRVAKKSGQVLDK.

The protein belongs to the universal ribosomal protein uL24 family. As to quaternary structure, part of the 50S ribosomal subunit.

Functionally, one of two assembly initiator proteins, it binds directly to the 5'-end of the 23S rRNA, where it nucleates assembly of the 50S subunit. In terms of biological role, one of the proteins that surrounds the polypeptide exit tunnel on the outside of the subunit. This is Large ribosomal subunit protein uL24 (rplX) from Bacillus spizizenii (strain ATCC 23059 / NRRL B-14472 / W23) (Bacillus subtilis subsp. spizizenii).